Reading from the N-terminus, the 162-residue chain is Cytochrome c-type biogenesis protein CcmE (162 aa).

Residues methionine 1–arginine 7 lie on the Cytoplasmic side of the membrane. The chain crosses the membrane as a helical; Signal-anchor for type II membrane protein span at residues leucine 8–alanine 28. The Periplasmic segment spans residues leucine 29 to glutamine 162. Heme-binding residues include histidine 122 and tyrosine 126. Residues glutamine 138–glutamine 162 form a disordered region.

Belongs to the CcmE/CycJ family.

It is found in the cell inner membrane. Heme chaperone required for the biogenesis of c-type cytochromes. Transiently binds heme delivered by CcmC and transfers the heme to apo-cytochromes in a process facilitated by CcmF and CcmH. This chain is Cytochrome c-type biogenesis protein CcmE, found in Nitrobacter hamburgensis (strain DSM 10229 / NCIMB 13809 / X14).